The following is a 490-amino-acid chain: Zinc finger protein STP4 (490 aa).

2 stretches are compositionally biased toward low complexity: residues 1–16 (MLVSSSFASSIDSVMS) and 52–73 (PSLPLLSSTTSSSRSTLSSTLN). Residues 1–85 (MLVSSSFASS…PPPPLTTSYS (85 aa)) form a disordered region. Ser-153 and Ser-155 each carry phosphoserine. The span at 231–247 (QQQQQLNSSSSASALPS) shows a compositional bias: low complexity. The tract at residues 231 to 273 (QQQQQLNSSSSASALPSIHSPLTNEHTSRYSSSLKDSAKITKQ) is disordered. Residues 250 to 265 (SPLTNEHTSRYSSSLK) are compositionally biased toward polar residues. The C2H2-type zinc-finger motif lies at 304–326 (HKCPICQRGFARNNDLIRHKKRH). The tract at residues 338–375 (ESDNNSGADDQDDTARTSANNDSDDSNDKLAASSSSEE) is disordered.

It localises to the cytoplasm. It is found in the mitochondrion. Its subcellular location is the nucleus. The polypeptide is Zinc finger protein STP4 (STP4) (Saccharomyces cerevisiae (strain ATCC 204508 / S288c) (Baker's yeast)).